The sequence spans 520 residues: uncharacterized protein (520 aa).

9 consecutive transmembrane segments (helical) span residues 38-58 (VVLI…IPGG), 84-104 (IAIY…GIFN), 105-125 (IGIS…ILKV), 138-158 (IITV…VATL), 167-187 (VVSA…LVET), 220-240 (FGWL…AVVL), 271-291 (FLSF…VYTA), 318-338 (IAIG…SVLI), and 355-375 (ASLV…MVYF).

The protein resides in the cell membrane. This is an uncharacterized protein from Mycoplasma genitalium (strain ATCC 33530 / DSM 19775 / NCTC 10195 / G37) (Mycoplasmoides genitalium).